Here is a 1030-residue protein sequence, read N- to C-terminus: Halotolerance protein 9 (1030 aa).

Residues 136-166 constitute a DNA-binding region (zn(2)-C6 fungal-type); that stretch reads CDHCRKRKIRCDEVDQQTKKCSNCIKFQLPC. The tract at residues 185–208 is disordered; sequence HHATPGESLQTSNSISNPVASSSV. The segment covering 196–208 has biased composition (low complexity); sequence SNSISNPVASSSV. Serine 221 and serine 937 each carry phosphoserine.

It localises to the cytoplasm. The protein localises to the nucleus. Putative transcription factor involved in halotolerance. This chain is Halotolerance protein 9 (HAL9), found in Saccharomyces cerevisiae (strain ATCC 204508 / S288c) (Baker's yeast).